The sequence spans 1886 residues: Nuclear pore membrane glycoprotein 210 (1886 aa).

The signal sequence occupies residues 1-25 (MARASLIQPGLWALLLLQAVGPAVA). Residues 26 to 1805 (AKLNIPKVLL…GASLLSHFLD (1780 aa)) lie on the Perinuclear space side of the membrane. 4 N-linked (GlcNAc...) asparagine glycosylation sites follow: Asn337, Asn484, Asn681, and Asn1039. In terms of domain architecture, BIG2 spans 1078–1151 (FPPFRLIPRK…VQAVDAETGK (74 aa)). The helical transmembrane segment at 1806-1828 (SYQVMFFTFFALLAGTAVTIIAY) threads the bilayer. At 1829-1886 (HTVCAPRELASPLALTPHASPQHSPHYLASSPTAFNTLPSDRKASPPSGLWSPAYASH) the chain is on the cytoplasmic side. At Ser1839 the chain carries Phosphoserine. At Thr1844 the chain carries Phosphothreonine. Positions 1866-1886 (LPSDRKASPPSGLWSPAYASH) are disordered. Phosphoserine is present on residues Ser1873, Ser1876, Ser1880, and Ser1885.

Belongs to the NUP210 family. In terms of assembly, forms dimers and possibly higher-order oligomers. In terms of processing, N-glycosylated, but not all potential glycosylation sites may be used. Contains high-mannose type oligosaccharides. Post-translationally, phosphorylated at Ser-1880 in mitosis specifically; not phosphorylated in interphase.

It localises to the nucleus. The protein resides in the nuclear pore complex. The protein localises to the nucleus membrane. It is found in the endoplasmic reticulum membrane. Its function is as follows. Nucleoporin essential for nuclear pore assembly and fusion, nuclear pore spacing, as well as structural integrity. The polypeptide is Nuclear pore membrane glycoprotein 210 (Nup210) (Rattus norvegicus (Rat)).